The chain runs to 336 residues: Type II methyltransferase M2.HphI (336 aa).

This sequence belongs to the N(4)/N(6)-methyltransferase family.

It catalyses the reaction a 2'-deoxyadenosine in DNA + S-adenosyl-L-methionine = an N(6)-methyl-2'-deoxyadenosine in DNA + S-adenosyl-L-homocysteine + H(+). In terms of biological role, an alpha subtype methylase that recognizes the double-stranded sequence 5'-GGTGA-3', probably methylates A-5 on the top strand, and protects the DNA from cleavage by the HphI endonuclease. This Haemophilus parahaemolyticus protein is Type II methyltransferase M2.HphI (hphIBM).